The primary structure comprises 437 residues: Nuclear distribution protein PAC1 (437 aa).

Residues 64–94 (LSVIRLQRKVMDLETRLEAAEREASSTHKAN) adopt a coiled-coil conformation. WD repeat units lie at residues 114-153 (LHKQ…IETT), 156-217 (AHTR…ANVK), 221-260 (GHDH…CVRT), 263-301 (GHTD…GKMT), 304-356 (GHEH…LLIL), 358-397 (GHDN…RCIR), and 401-437 (AHGH…KVWQ). Residues 165 to 186 (DFSQPDTGASRDKSHDKPRADV) form a disordered region. A compositionally biased stretch (basic and acidic residues) spans 173-186 (ASRDKSHDKPRADV).

It belongs to the WD repeat LIS1/nudF family. Self-associates. Interacts with NDL1 and dynein.

Its subcellular location is the cytoplasm. The protein resides in the cytoskeleton. The protein localises to the spindle pole. Its function is as follows. Positively regulates the activity of the minus-end directed microtubule motor protein dynein. Plays a central role in positioning the mitotic spindle at the bud neck during cell division. Targets cytoplasmic dynein to microtubule plus ends, thereby promoting dynein-mediated microtubule sliding along the bud cortex and consequently the movement of the mitotic spindle to the bud neck. This Yarrowia lipolytica (strain CLIB 122 / E 150) (Yeast) protein is Nuclear distribution protein PAC1.